Here is a 378-residue protein sequence, read N- to C-terminus: UDP-N-acetylglucosamine--N-acetylmuramyl-(pentapeptide) pyrophosphoryl-undecaprenol N-acetylglucosamine transferase (378 aa).

Residues 14–16 (TGG), N125, R165, S193, and Q293 contribute to the UDP-N-acetyl-alpha-D-glucosamine site.

This sequence belongs to the glycosyltransferase 28 family. MurG subfamily.

Its subcellular location is the cell inner membrane. The enzyme catalyses di-trans,octa-cis-undecaprenyl diphospho-N-acetyl-alpha-D-muramoyl-L-alanyl-D-glutamyl-meso-2,6-diaminopimeloyl-D-alanyl-D-alanine + UDP-N-acetyl-alpha-D-glucosamine = di-trans,octa-cis-undecaprenyl diphospho-[N-acetyl-alpha-D-glucosaminyl-(1-&gt;4)]-N-acetyl-alpha-D-muramoyl-L-alanyl-D-glutamyl-meso-2,6-diaminopimeloyl-D-alanyl-D-alanine + UDP + H(+). Its pathway is cell wall biogenesis; peptidoglycan biosynthesis. Cell wall formation. Catalyzes the transfer of a GlcNAc subunit on undecaprenyl-pyrophosphoryl-MurNAc-pentapeptide (lipid intermediate I) to form undecaprenyl-pyrophosphoryl-MurNAc-(pentapeptide)GlcNAc (lipid intermediate II). This Bartonella tribocorum (strain CIP 105476 / IBS 506) protein is UDP-N-acetylglucosamine--N-acetylmuramyl-(pentapeptide) pyrophosphoryl-undecaprenol N-acetylglucosamine transferase.